The following is a 317-amino-acid chain: Acetyl-coenzyme A carboxylase carboxyl transferase subunit alpha (317 aa).

In terms of domain architecture, CoA carboxyltransferase C-terminal spans 40–293 (LEKRSADALK…GDIIAASLRS (254 aa)).

Belongs to the AccA family. As to quaternary structure, acetyl-CoA carboxylase is a heterohexamer composed of biotin carboxyl carrier protein (AccB), biotin carboxylase (AccC) and two subunits each of ACCase subunit alpha (AccA) and ACCase subunit beta (AccD).

It is found in the cytoplasm. The catalysed reaction is N(6)-carboxybiotinyl-L-lysyl-[protein] + acetyl-CoA = N(6)-biotinyl-L-lysyl-[protein] + malonyl-CoA. It participates in lipid metabolism; malonyl-CoA biosynthesis; malonyl-CoA from acetyl-CoA: step 1/1. Its function is as follows. Component of the acetyl coenzyme A carboxylase (ACC) complex. First, biotin carboxylase catalyzes the carboxylation of biotin on its carrier protein (BCCP) and then the CO(2) group is transferred by the carboxyltransferase to acetyl-CoA to form malonyl-CoA. The protein is Acetyl-coenzyme A carboxylase carboxyl transferase subunit alpha of Brucella melitensis biotype 2 (strain ATCC 23457).